A 505-amino-acid chain; its full sequence is Deoxyguanosinetriphosphate triphosphohydrolase (505 aa).

The HD domain maps to 66–273; it reads RLTHSMEVQQ…MEAADDISYC (208 aa).

The protein belongs to the dGTPase family. Type 1 subfamily. Homotetramer. Mg(2+) is required as a cofactor.

The enzyme catalyses dGTP + H2O = 2'-deoxyguanosine + triphosphate + H(+). DGTPase preferentially hydrolyzes dGTP over the other canonical NTPs. The protein is Deoxyguanosinetriphosphate triphosphohydrolase of Salmonella enteritidis PT4 (strain P125109).